Here is a 207-residue protein sequence, read N- to C-terminus: Large ribosomal subunit protein uL4 (207 aa).

Belongs to the universal ribosomal protein uL4 family. In terms of assembly, part of the 50S ribosomal subunit.

Functionally, one of the primary rRNA binding proteins, this protein initially binds near the 5'-end of the 23S rRNA. It is important during the early stages of 50S assembly. It makes multiple contacts with different domains of the 23S rRNA in the assembled 50S subunit and ribosome. Forms part of the polypeptide exit tunnel. The protein is Large ribosomal subunit protein uL4 of Rickettsia conorii (strain ATCC VR-613 / Malish 7).